Here is a 452-residue protein sequence, read N- to C-terminus: uncharacterized protein (452 aa).

The signal sequence occupies residues 1–20 (MQFFGSLFVSLLGAAGLANA). Residues 130–151 (TQSSSNSTSTMNSTGSVSGGSV) form a disordered region.

It localises to the endoplasmic reticulum. This is an uncharacterized protein from Schizosaccharomyces pombe (strain 972 / ATCC 24843) (Fission yeast).